Here is a 64-residue protein sequence, read N- to C-terminus: NSAHPCCDPVTCKPKRGEHCISGPCCRNCKFLSPGTICKKARGDDMNDYCTGISSDCPRNPWKD.

The region spanning 1-64 (NSAHPCCDPV…SDCPRNPWKD (64 aa)) is the Disintegrin domain. Disulfide bonds link Cys-6/Cys-29, Cys-20/Cys-26, Cys-25/Cys-50, and Cys-38/Cys-57. A Cell attachment site motif is present at residues 42–44 (RGD).

Belongs to the disintegrin family. Dimeric disintegrin subfamily. Heterodimer with subunit alpha; disulfide-linked. Expressed by the venom gland.

It is found in the secreted. Inhibits ADP-induced human platelet aggregation. Antagonist of alpha-IIb/beta-3 (ITGA2B/ITGB3). In Cerastes vipera (Sahara sand viper), this protein is Disintegrin CV-11-beta.